We begin with the raw amino-acid sequence, 173 residues long: Protein tyrosine phosphatase type IVA 1 (173 aa).

The region spanning 8–161 (APVEVTYKNM…YRPKMRLRFK (154 aa)) is the Tyrosine-protein phosphatase domain. Cys-49 and Cys-104 form a disulfide bridge. The active-site Proton donor is Asp-72. The interval 97-132 (GCCIAVHCVAGLGRAPVLVALALIEGGMKYEDAVQF) is interaction with ATF5. Cys-104 serves as the catalytic Phosphocysteine intermediate. 105 to 110 (VAGLGR) is a phosphate binding site. Residue Arg-110 participates in substrate binding. Cys-170 is modified (cysteine methyl ester). Residue Cys-170 is the site of S-farnesyl cysteine attachment. A propeptide spans 171 to 173 (CIQ) (removed in mature form).

This sequence belongs to the protein-tyrosine phosphatase family. As to quaternary structure, homotrimer. Interacts with ATF5 and tubulin. Farnesylated. Farnesylation is required for membrane targeting.

Its subcellular location is the cell membrane. It is found in the early endosome. The protein resides in the endoplasmic reticulum. It localises to the cytoplasm. The protein localises to the cytoskeleton. Its subcellular location is the spindle. It is found in the nucleus. It carries out the reaction O-phospho-L-tyrosyl-[protein] + H2O = L-tyrosyl-[protein] + phosphate. Its activity is regulated as follows. Inhibited by sodium orthovanadate and pentamidine. Functionally, protein tyrosine phosphatase which stimulates progression from G1 into S phase during mitosis. May play a role in the development and maintenance of differentiating epithelial tissues. This Pongo abelii (Sumatran orangutan) protein is Protein tyrosine phosphatase type IVA 1 (PTP4A1).